The chain runs to 436 residues: Nucleolar protein 4-like (436 aa).

The interval 1–184 is disordered; sequence MSDSTWMSAD…KMNDSEGMDP (184 aa). The segment covering 41–61 has biased composition (low complexity); sequence SESGSGNGSSTLNPSTSSSTQ. Ser130 carries the post-translational modification Phosphoserine. Residues 160-169 are compositionally biased toward acidic residues; the sequence is ADDDDDDHDD. Residues 170-184 are compositionally biased toward basic and acidic residues; sequence HEDNDKMNDSEGMDP. Ser295 bears the Phosphoserine mark. Residues 351-366 are compositionally biased toward polar residues; the sequence is QPPASLQTGNHSNGPT. Positions 351–400 are disordered; sequence QPPASLQTGNHSNGPTDLSMKGGASTTSTTPTPTPSSTSTSRPVPTAQLS. The segment covering 375–396 has biased composition (low complexity); sequence STTSTTPTPTPSSTSTSRPVPT.

This is Nucleolar protein 4-like (NOL4L) from Pongo abelii (Sumatran orangutan).